Reading from the N-terminus, the 149-residue chain is UPF0260 protein PA1299 (149 aa).

It belongs to the UPF0260 family.

This is UPF0260 protein PA1299 from Pseudomonas aeruginosa (strain ATCC 15692 / DSM 22644 / CIP 104116 / JCM 14847 / LMG 12228 / 1C / PRS 101 / PAO1).